A 326-amino-acid chain; its full sequence is Intracellular serine protease (326 aa).

Positions 23 to 303 (PRGVEMIQAP…NGLLYLTAVE (281 aa)) constitute a Peptidase S8 domain. Residues Asp-49, His-86, and Ser-244 each act as charge relay system in the active site.

Belongs to the peptidase S8 family.

Functionally, involved in the generation of beta- and alpha-amylases from the large amylase precursor. This chain is Intracellular serine protease (isp), found in Paenibacillus polymyxa (Bacillus polymyxa).